Here is a 411-residue protein sequence, read N- to C-terminus: Allantoate amidohydrolase (411 aa).

Residues His81, Asp92, Glu127, and His190 each coordinate Zn(2+). 3 residues coordinate allantoate: Arg215, Asn275, and Arg288. A Zn(2+)-binding site is contributed by His382.

This sequence belongs to the peptidase M20 family. As to quaternary structure, homodimer. It depends on Zn(2+) as a cofactor.

The protein resides in the cytoplasm. It carries out the reaction allantoate + H2O + 2 H(+) = (S)-2-ureidoglycine + NH4(+) + CO2. Its pathway is nitrogen metabolism; (S)-allantoin degradation. With respect to regulation, sulfate could be an allosteric effector of the enzyme that is responsible for stabilizing substrate binding. In addition, this anion effector may act as a counterion during enzyme-mediated catalysis. Functionally, involved in the anaerobic nitrogen utilization via the assimilation of allantoin. Catalyzes specifically the hydrolysis of allantoate to yield CO2, NH3 and S-ureidoglycine, which is unstable and readily undergoes a second deamination by S-ureidoglycine aminohydrolase AllE to yield S-ureidoglycolate and NH3. In vivo, the spontaneous release of S-ureidoglycolate and ammonia from S-ureidoglycine appears to be too slow to sustain an efficient flux of nitrogen. This chain is Allantoate amidohydrolase, found in Escherichia coli (strain K12).